The following is a 349-amino-acid chain: Fructose-1,6-bisphosphatase class 1 (349 aa).

Mg(2+) is bound by residues E113, D135, I137, and D138. Substrate is bound by residues 138 to 141, N230, Y258, and K288; that span reads DGSS. E294 provides a ligand contact to Mg(2+).

It belongs to the FBPase class 1 family. As to quaternary structure, homotetramer. Requires Mg(2+) as cofactor.

The protein resides in the cytoplasm. The catalysed reaction is beta-D-fructose 1,6-bisphosphate + H2O = beta-D-fructose 6-phosphate + phosphate. Its pathway is carbohydrate biosynthesis; Calvin cycle. The polypeptide is Fructose-1,6-bisphosphatase class 1 (Trichormus variabilis (strain ATCC 29413 / PCC 7937) (Anabaena variabilis)).